A 519-amino-acid polypeptide reads, in one-letter code: Ribonuclease Y (519 aa).

Residues proline 3–valine 23 form a helical membrane-spanning segment. The KH domain maps to threonine 209–leucine 272. The 94-residue stretch at valine 335–alanine 428 folds into the HD domain.

This sequence belongs to the RNase Y family.

Its subcellular location is the cell membrane. Functionally, endoribonuclease that initiates mRNA decay. In Bacillus licheniformis (strain ATCC 14580 / DSM 13 / JCM 2505 / CCUG 7422 / NBRC 12200 / NCIMB 9375 / NCTC 10341 / NRRL NRS-1264 / Gibson 46), this protein is Ribonuclease Y.